Reading from the N-terminus, the 579-residue chain is Membrane protein insertase YidC (579 aa).

Residues Leu-10–His-30 form a helical membrane-spanning segment. Residues Pro-35 to Lys-61 are disordered. The next 5 helical transmembrane spans lie at Phe-330–Leu-350, Asp-351–Ile-371, Val-423–Tyr-443, Leu-478–Ile-498, and Pro-523–Phe-543. The span at Ser-560–Lys-572 shows a compositional bias: basic and acidic residues. The interval Ser-560–Ala-579 is disordered.

This sequence belongs to the OXA1/ALB3/YidC family. Type 1 subfamily. In terms of assembly, interacts with the Sec translocase complex via SecD. Specifically interacts with transmembrane segments of nascent integral membrane proteins during membrane integration.

It is found in the cell inner membrane. Required for the insertion and/or proper folding and/or complex formation of integral membrane proteins into the membrane. Involved in integration of membrane proteins that insert both dependently and independently of the Sec translocase complex, as well as at least some lipoproteins. Aids folding of multispanning membrane proteins. The protein is Membrane protein insertase YidC of Zymomonas mobilis subsp. mobilis (strain ATCC 31821 / ZM4 / CP4).